Consider the following 211-residue polypeptide: Thiamine-phosphate synthase (211 aa).

4-amino-2-methyl-5-(diphosphooxymethyl)pyrimidine contacts are provided by residues 39 to 43 and asparagine 71; that span reads QLREK. Mg(2+) is bound by residues aspartate 72 and aspartate 91. Serine 110 lines the 4-amino-2-methyl-5-(diphosphooxymethyl)pyrimidine pocket. 136–138 provides a ligand contact to 2-[(2R,5Z)-2-carboxy-4-methylthiazol-5(2H)-ylidene]ethyl phosphate; the sequence is TAT. A 4-amino-2-methyl-5-(diphosphooxymethyl)pyrimidine-binding site is contributed by lysine 139. 2-[(2R,5Z)-2-carboxy-4-methylthiazol-5(2H)-ylidene]ethyl phosphate-binding positions include alanine 167 and 187-188; that span reads VS.

Belongs to the thiamine-phosphate synthase family. Mg(2+) serves as cofactor.

The catalysed reaction is 2-[(2R,5Z)-2-carboxy-4-methylthiazol-5(2H)-ylidene]ethyl phosphate + 4-amino-2-methyl-5-(diphosphooxymethyl)pyrimidine + 2 H(+) = thiamine phosphate + CO2 + diphosphate. The enzyme catalyses 2-(2-carboxy-4-methylthiazol-5-yl)ethyl phosphate + 4-amino-2-methyl-5-(diphosphooxymethyl)pyrimidine + 2 H(+) = thiamine phosphate + CO2 + diphosphate. It catalyses the reaction 4-methyl-5-(2-phosphooxyethyl)-thiazole + 4-amino-2-methyl-5-(diphosphooxymethyl)pyrimidine + H(+) = thiamine phosphate + diphosphate. Its pathway is cofactor biosynthesis; thiamine diphosphate biosynthesis; thiamine phosphate from 4-amino-2-methyl-5-diphosphomethylpyrimidine and 4-methyl-5-(2-phosphoethyl)-thiazole: step 1/1. Functionally, condenses 4-methyl-5-(beta-hydroxyethyl)thiazole monophosphate (THZ-P) and 2-methyl-4-amino-5-hydroxymethyl pyrimidine pyrophosphate (HMP-PP) to form thiamine monophosphate (TMP). In Solidesulfovibrio magneticus (strain ATCC 700980 / DSM 13731 / RS-1) (Desulfovibrio magneticus), this protein is Thiamine-phosphate synthase.